We begin with the raw amino-acid sequence, 204 residues long: Glycerol-3-phosphate acyltransferase (204 aa).

Transmembrane regions (helical) follow at residues 8-28, 53-73, 81-101, 116-136, and 155-175; these read ILIF…CYIF, VPAA…VVIA, FITA…IFFG, FGFS…VAII, and VIFT…IIIL.

It belongs to the PlsY family. Probably interacts with PlsX.

The protein resides in the cell inner membrane. The catalysed reaction is an acyl phosphate + sn-glycerol 3-phosphate = a 1-acyl-sn-glycero-3-phosphate + phosphate. Its pathway is lipid metabolism; phospholipid metabolism. Catalyzes the transfer of an acyl group from acyl-phosphate (acyl-PO(4)) to glycerol-3-phosphate (G3P) to form lysophosphatidic acid (LPA). This enzyme utilizes acyl-phosphate as fatty acyl donor, but not acyl-CoA or acyl-ACP. This chain is Glycerol-3-phosphate acyltransferase, found in Francisella tularensis subsp. tularensis (strain FSC 198).